Here is a 191-residue protein sequence, read N- to C-terminus: Programmed cell death protein 6 (191 aa).

A2 is modified (N-acetylalanine). 5 consecutive EF-hand domains span residues 23–58 (PDQS…GTWT), 59–89 (PFNP…TGVW), 90–125 (KYIT…FGYR), 126–161 (LSDQ…LQRL), and 162–191 (TDIF…FSIV). Ca(2+) contacts are provided by D36, D38, S40, V42, and E47. Ca(2+) is bound by residues D103, D105, S107, M109, and E114. Mg(2+)-binding residues include D169, D171, D173, and W175.

Homodimer and heterodimer; heterodimerizes (via the EF-hand 5) with PEF1. Isoform 1 and isoform 2 self-associate; probably forming homodimers. Interacts with CPNE4 (via VWFA domain). Interacts with PDCD6IP; the interaction is calcium-dependent. Interacts with RBM22. Interacts with PLSCR4. Interacts with ANXA7 and TSG101. Interacts with DAPK1. Interacts with SEC31A; the interaction is calcium-dependent and promotes monoubiquitination of SEC31A. Interacts with ANXA11 (via N-terminus); the interaction is calcium-dependent. Interacts with PLSCR3 (via N-terminus); the interaction is calcium-dependent. Interacts with MCOLN1; the interaction is calcium-dependent. Interacts with KDR; the interaction is calcium-dependent. Interacts with HEBP2; the interaction is calcium-dependent. Interacts with TFG. Isoform 1: Interacts with SHISA5, leading to stabilize it. Isoform 2: Does not interact with SHISA5. Isoform 2: Does not interact with PDCD6IP, TSG101, ANXA7 and ANXA11.

The protein resides in the endoplasmic reticulum membrane. It is found in the cytoplasmic vesicle. Its subcellular location is the COPII-coated vesicle membrane. The protein localises to the cytoplasm. It localises to the nucleus. The protein resides in the endosome. Functionally, calcium sensor that plays a key role in processes such as endoplasmic reticulum (ER)-Golgi vesicular transport, endosomal biogenesis or membrane repair. Acts as an adapter that bridges unrelated proteins or stabilizes weak protein-protein complexes in response to calcium: calcium-binding triggers exposure of apolar surface, promoting interaction with different sets of proteins thanks to 3 different hydrophobic pockets, leading to translocation to membranes. Involved in ER-Golgi transport by promoting the association between PDCD6IP and TSG101, thereby bridging together the ESCRT-III and ESCRT-I complexes. Together with PEF1, acts as a calcium-dependent adapter for the BCR(KLHL12) complex, a complex involved in ER-Golgi transport by regulating the size of COPII coats. In response to cytosolic calcium increase, the heterodimer formed with PEF1 interacts with, and bridges together the BCR(KLHL12) complex and SEC31 (SEC31A or SEC31B), promoting monoubiquitination of SEC31 and subsequent collagen export, which is required for neural crest specification. Involved in the regulation of the distribution and function of MCOLN1 in the endosomal pathway. Promotes localization and polymerization of TFG at endoplasmic reticulum exit site. Required for T-cell receptor-, Fas-, and glucocorticoid-induced apoptosis. May mediate Ca(2+)-regulated signals along the death pathway: interaction with DAPK1 can accelerate apoptotic cell death by increasing caspase-3 activity. Its role in apoptosis may however be indirect, as suggested by knockout experiments. May inhibit KDR/VEGFR2-dependent angiogenesis; the function involves inhibition of VEGF-induced phosphorylation of the Akt signaling pathway. In case of infection by HIV-1 virus, indirectly inhibits HIV-1 production by affecting viral Gag expression and distribution. Has a lower Ca(2+) affinity than isoform 1. This is Programmed cell death protein 6 (PDCD6) from Homo sapiens (Human).